The following is an 859-amino-acid chain: Leucine--tRNA ligase (859 aa).

Positions P42 to H52 match the 'HIGH' region motif. Residues K618–S622 carry the 'KMSKS' region motif. K621 contributes to the ATP binding site.

This sequence belongs to the class-I aminoacyl-tRNA synthetase family.

Its subcellular location is the cytoplasm. It catalyses the reaction tRNA(Leu) + L-leucine + ATP = L-leucyl-tRNA(Leu) + AMP + diphosphate. The protein is Leucine--tRNA ligase of Shewanella amazonensis (strain ATCC BAA-1098 / SB2B).